The primary structure comprises 139 residues: MSATEQPQQQQQKLRWGIAWIYSSSNNTIITITDLTGAETVARVSGGMVVRADKDKPSPWAAMQAAYKAAQLALARGINAVHIKVRGPGGYGMKVPGPGASAAIRALARSGLIIGRIEDVTPIPHDTIRPPSGRKGRRV.

It belongs to the universal ribosomal protein uS11 family. Part of the 30S ribosomal subunit.

Its function is as follows. Located on the platform of the 30S subunit. In Pyrobaculum islandicum (strain DSM 4184 / JCM 9189 / GEO3), this protein is Small ribosomal subunit protein uS11.